A 524-amino-acid chain; its full sequence is Solute carrier family 2, facilitated glucose transporter member 2 (524 aa).

Over 1–6 (MTEDKI) the chain is Cytoplasmic. A helical membrane pass occupies residues 7-26 (TGTLVFAVLTAVLGSFQFGY). Over 27–89 (DIGVINAPQQ…SWAEEETTAS (63 aa)) the chain is Extracellular. Asn-62 carries an N-linked (GlcNAc...) asparagine glycan. The chain crosses the membrane as a helical span at residues 90–115 (ASLIIMLWSLSVSIFAIGGMIASFFG). At 116–126 (GMLGDRLGRIK) the chain is on the cytoplasmic side. Residues 127–145 (AMLVANILSLVGALLMWFS) form a helical membrane-spanning segment. At 146–150 (KLGPS) the chain is on the extracellular side. A helical membrane pass occupies residues 151–176 (HILIISGRGISGLYCGLISGLVPMYI). Topologically, residues 177 to 187 (GEIAPTKFRGA) are cytoplasmic. The helical transmembrane segment at 188-211 (IGALHQLAIVTGILVSQIIGLDFL) threads the bilayer. Residue Gln-193 coordinates D-glucose. The Extracellular portion of the chain corresponds to 212-216 (LGNHE). The helical transmembrane segment at 217 to 239 (LWHILLGLSAVPAVLQSLMLFFC) threads the bilayer. Topologically, residues 240 to 303 (PESPRYLYIK…LFTNSSYRQP (64 aa)) are cytoplasmic. A helical transmembrane segment spans residues 304-327 (ILVALMLHMAQQFSGINGIFYYST). Residues 314-315 (QQ) and Asn-320 each bind D-glucose. Over 328–338 (SIFQTAGISQP) the chain is Extracellular. A helical membrane pass occupies residues 339–360 (VYATIGVGAINTIFTALSVFLV). Asn-349 lines the D-glucose pocket. Residues 361–366 (EKAGRR) are Cytoplasmic-facing. A helical membrane pass occupies residues 367–389 (SLFLIGMSGMFVCAIFMSVGLVL). Topologically, residues 390–394 (LDKLP) are extracellular. Residues 395-413 (WMSYVSMTAIFLFVSFFEI) form a helical membrane-spanning segment. Residues Glu-412 and Trp-420 each contribute to the D-glucose site. At 414–433 (GPGPIPWFMVAEFFSQGPRP) the chain is on the cytoplasmic side. Residues 434 to 458 (AALAMAAFSNWTCNFIIALCFQYIA) form a helical membrane-spanning segment. The Extracellular portion of the chain corresponds to 459-463 (DFCGP). The helical transmembrane segment at 464–482 (YVFFLFAGVVLVFTLFTFF) threads the bilayer. The Cytoplasmic portion of the chain corresponds to 483–524 (KVPETKGKSFEEIAAEFQKKSGSAQSPKAAVEMEFLGATETV). Residue Thr-523 is modified to Phosphothreonine.

The protein belongs to the major facilitator superfamily. Sugar transporter (TC 2.A.1.1) family. Glucose transporter subfamily. N-glycosylated; required for stability and retention at the cell surface of pancreatic beta cells.

It localises to the cell membrane. It carries out the reaction D-glucose(out) = D-glucose(in). The catalysed reaction is D-fructose(out) = D-fructose(in). It catalyses the reaction L-dehydroascorbate(out) = L-dehydroascorbate(in). The enzyme catalyses D-galactose(in) = D-galactose(out). With respect to regulation, D-glucose and maltose competitively inhibit fructose transport. D-glucose, D-fructose and maltose inhibit deoxyglucose transport. In terms of biological role, facilitative hexose transporter that mediates the transport of glucose, fructose and galactose. Likely mediates the bidirectional transfer of glucose across the plasma membrane of hepatocytes and is responsible for uptake of glucose by the beta cells; may comprise part of the glucose-sensing mechanism of the beta cell. May also participate with the Na(+)/glucose cotransporter in the transcellular transport of glucose in the small intestine and kidney. Also able to mediate the transport of dehydroascorbate. In Sus scrofa (Pig), this protein is Solute carrier family 2, facilitated glucose transporter member 2.